We begin with the raw amino-acid sequence, 715 residues long: Fatty acid oxidation complex subunit alpha (715 aa).

The segment at 1-190 is enoyl-CoA hydratase/isomerase; sequence MIYEGKAITV…KVGAVDAVVA (190 aa). A substrate-binding site is contributed by Asp297. Residues 312–715 form a 3-hydroxyacyl-CoA dehydrogenase region; that stretch reads RDVKQAAVLG…MAKNGQSFFG (404 aa). NAD(+) is bound by residues Met325, Asp344, 401-403, Lys408, and Ser430; that span reads VVE. His451 serves as the catalytic For 3-hydroxyacyl-CoA dehydrogenase activity. Residue Asn454 coordinates NAD(+). Asn501 and Tyr660 together coordinate substrate.

The protein in the N-terminal section; belongs to the enoyl-CoA hydratase/isomerase family. It in the C-terminal section; belongs to the 3-hydroxyacyl-CoA dehydrogenase family. In terms of assembly, heterotetramer of two alpha chains (FadB) and two beta chains (FadA).

It catalyses the reaction a (3S)-3-hydroxyacyl-CoA + NAD(+) = a 3-oxoacyl-CoA + NADH + H(+). The enzyme catalyses a (3S)-3-hydroxyacyl-CoA = a (2E)-enoyl-CoA + H2O. It carries out the reaction a 4-saturated-(3S)-3-hydroxyacyl-CoA = a (3E)-enoyl-CoA + H2O. The catalysed reaction is (3S)-3-hydroxybutanoyl-CoA = (3R)-3-hydroxybutanoyl-CoA. It catalyses the reaction a (3Z)-enoyl-CoA = a 4-saturated (2E)-enoyl-CoA. The enzyme catalyses a (3E)-enoyl-CoA = a 4-saturated (2E)-enoyl-CoA. It participates in lipid metabolism; fatty acid beta-oxidation. Functionally, involved in the aerobic and anaerobic degradation of long-chain fatty acids via beta-oxidation cycle. Catalyzes the formation of 3-oxoacyl-CoA from enoyl-CoA via L-3-hydroxyacyl-CoA. It can also use D-3-hydroxyacyl-CoA and cis-3-enoyl-CoA as substrate. The polypeptide is Fatty acid oxidation complex subunit alpha (Pseudomonas fluorescens (strain SBW25)).